The following is a 273-amino-acid chain: DNA repair protein RecO (273 aa).

The segment at 250 to 273 (NVGQNPSGKDDLNERRDVDGTGES) is disordered. Residues 257–273 (GKDDLNERRDVDGTGES) show a composition bias toward basic and acidic residues.

The protein belongs to the RecO family.

In terms of biological role, involved in DNA repair and RecF pathway recombination. The chain is DNA repair protein RecO from Desulfitobacterium hafniense (strain DSM 10664 / DCB-2).